The sequence spans 374 residues: Transcription factor NF-E2 45 kDa subunit (374 aa).

Disordered stretches follow at residues 1–21 (MSPCPPQQSRNRVTQLPIPEP) and 40–61 (LNAPSEPSFEPPAPVPYPGPPP). Positions 1 to 83 (MSPCPPQQSR…PGFPLPAPPY (83 aa)) are required for interaction with MAPK8. The transactivation domain stretch occupies residues 1–207 (MSPCPPQQSR…PPAETPLALE (207 aa)). Over residues 48 to 61 (FEPPAPVPYPGPPP) the composition is skewed to pro residues. Short sequence motifs (PXY motif) lie at residues 61–65 (PPPSY) and 79–83 (PAPPY). Positions 132-165 (LSAGPSKPQEDPESDSGLSLNYSDAESLELEGTE) are disordered. A Phosphoserine; by MAPK8 modification is found at serine 158. Serine 171 is modified (phosphoserine; by PKA). The tract at residues 207–227 (EPSSGPVRAKPTARGEAGSRD) is disordered. The bZIP domain occupies 267 to 330 (LVRDIRRRGK…EVMRQQLTDL (64 aa)). Residues 269 to 288 (RDIRRRGKNKVAAQNCRKRK) are basic motif. The segment at 292 to 299 (IVQLEREL) is leucine-zipper. Lysine 369 is covalently cross-linked (Glycyl lysine isopeptide (Lys-Gly) (interchain with G-Cter in SUMO); alternate). Residue lysine 369 forms a Glycyl lysine isopeptide (Lys-Gly) (interchain with G-Cter in SUMO1); alternate linkage.

It belongs to the bZIP family. CNC subfamily. Homodimer; can bind DNA as a homodimer. Erythroid transcription activator nuclear factor erythroid-derived 2 (NF-E2), composed of a heterodimer of NFE2 and MAFK, possesses transactivation activity on beta-globin. Also forms high affinity heterodimer with MAFG; the interaction promotes erythropoiesis. Interacts (via the PXY motif 1) with ITCH (via the WW 1 domain); the interaction promotes 'Lys63'-linked ubiquitination of NFE2, translocates it to the cytoplasm and inhibits its transactivation activity. Interacts with KMT2D/MLL2; the interaction promotes transactivation of the beta-globin locus. Interacts with MAPK8 (phosphorylated form); the interaction leads to phosphorylation of NFE2 in undifferentiated cells. Post-translationally, phosphorylated on serine residues. In undifferentiated erythrocytes, phosphorylated by MAPK8 which then leads to ubiquitination and protein degradation. Sumoylated. Sumoylation is required for translocation to nuclear bodies PODs, anchoring to the gene loci, and transactivation of the beta-globin gene. In terms of processing, ubiquitinated mainly by 'Lys63'-linked ubiquitin. Polyubiquitination with 'Lys63'-linked ubiquitin by ITCH retains NFE2 in the cytoplasm preventing its transactivation activity. In undifferentiated erythrocyte, is ubiquitinated after MAPK8-mediatd phosphorylation leading to protein degradation.

The protein localises to the nucleus. Its subcellular location is the cytoplasm. Component of the NF-E2 complex essential for regulating erythroid and megakaryocytic maturation and differentiation. Binds to the hypersensitive site 2 (HS2) of the beta-globin control region (LCR). This subunit (NFE2) recognizes the TCAT/C sequence of the AP-1-like core palindrome present in a number of erythroid and megakaryocytic gene promoters. Requires MAFK or other small MAF proteins for binding to the NF-E2 motif. May play a role in all aspects of hemoglobin production from globin and heme synthesis to procurement of iron. This chain is Transcription factor NF-E2 45 kDa subunit (NFE2), found in Bos taurus (Bovine).